A 334-amino-acid chain; its full sequence is MTENSDKVPIALVGPDDVEFCSPPAYATLTVKPSSPARLLKVGAVVLISGAVLLLFGAIGAFYFWKGSDSHIYNVHYTMSINGKLQDGSMEIDAGNNLETFKMGSGAEEAIAVNDFQNGITGIRFAGGEKCYIKAQVKARIPEVGAVTKQSISSKLEGKIMPVKYEENSLIWVAVDQPVKDNSFLSSKVLELCGDLPIFWLKPTYPKEIQRERREVVRKIVPTTTKRPHSGPRSNPGAGRLNNETRPSVQEDSQAFNPDNPYHQQEGESMTFDPRLDHEGICCIECRRSYTHCQKICEPLGGYYPWPYNYQGCRSACRVIMPCSWWVARILGMV.

A helical membrane pass occupies residues 45–65; the sequence is VVLISGAVLLLFGAIGAFYFW. In terms of domain architecture, BRICHOS spans 104–201; that stretch reads GSGAEEAIAV…LCGDLPIFWL (98 aa). C131 and C193 are oxidised to a cystine. Positions 211–214 are excised as a propeptide; the sequence is RERR. Residues 218–268 form a disordered region; that stretch reads RKIVPTTTKRPHSGPRSNPGAGRLNNETRPSVQEDSQAFNPDNPYHQQEGE. The segment covering 242–257 has biased composition (polar residues); that stretch reads NNETRPSVQEDSQAFN. The N-linked (GlcNAc...) asparagine glycan is linked to N243. Intrachain disulfides connect C282-C286, C283-C323, C293-C317, and C297-C313.

This sequence belongs to the chondromodulin-1 family. Post-translationally, after cleavage, the post-translationally modified ChM-I is secreted as a glycoprotein. In terms of tissue distribution, detected in cartilage and cardiac valves (at protein level). Detected in the laminae fibrosa, spongiosa and ventricularis layers of normal cardiac valves (at protein level). Expression is decreased cardiac valves of patients with valvular heart disease (at protein level). Weakly expressed in chondrosarcoma.

It is found in the secreted. The protein resides in the extracellular space. Its subcellular location is the extracellular matrix. The protein localises to the endomembrane system. In terms of biological role, bifunctional growth regulator that stimulates the growth of cultured chondrocytes in the presence of basic fibroblast growth factor (FGF) but inhibits the growth of cultured vascular endothelial cells. May contribute to the rapid growth of cartilage and vascular invasion prior to the replacement of cartilage by bone during endochondral bone development. Inhibits in vitro tube formation and mobilization of endothelial cells. Plays a role as antiangiogenic factor in cardiac valves to suppress neovascularization. This Homo sapiens (Human) protein is Leukocyte cell-derived chemotaxin 1.